A 55-amino-acid chain; its full sequence is Ferredoxin-1 (55 aa).

4Fe-4S ferredoxin-type domains follow at residues 2-27 (YKIE…EQGD) and 28-55 (TIFV…PVAE). [4Fe-4S] cluster is bound by residues Cys8, Cys11, Cys14, Cys18, Cys37, Cys40, Cys43, and Cys47.

[4Fe-4S] cluster is required as a cofactor.

Its function is as follows. Ferredoxins are iron-sulfur proteins that transfer electrons in a wide variety of metabolic reactions. In Rhodospirillum rubrum, this protein is Ferredoxin-1.